The chain runs to 221 residues: GTP cyclohydrolase 1 (221 aa).

The Zn(2+) site is built by C109, H112, and C180.

This sequence belongs to the GTP cyclohydrolase I family. Toroid-shaped homodecamer, composed of two pentamers of five dimers.

The enzyme catalyses GTP + H2O = 7,8-dihydroneopterin 3'-triphosphate + formate + H(+). It participates in cofactor biosynthesis; 7,8-dihydroneopterin triphosphate biosynthesis; 7,8-dihydroneopterin triphosphate from GTP: step 1/1. The protein is GTP cyclohydrolase 1 of Blochmanniella pennsylvanica (strain BPEN).